The sequence spans 753 residues: Inactive protein-tyrosine phosphatase egg-4 (753 aa).

2 disordered regions span residues 26–46 (TSLQ…STDN) and 75–145 (SFRK…SGHG). The span at 35-46 (NTDDSSADSTDN) shows a compositional bias: low complexity. Basic and acidic residues-rich tracts occupy residues 84-94 (AQKDRRSKERL) and 129-145 (VSEK…SGHG). A Tyrosine-protein phosphatase domain is found at 408–661 (MERRFEILEN…IFVHRLVAFF (254 aa)).

Belongs to the protein-tyrosine phosphatase family. Part of a complex, consisting of pseudophosphatases egg-3, egg-4, egg-5 and kinase mbk-2; this complex is required for the oocyte-to-zygote transition. Interacts (via tyrosine-protein phosphatase domain) with kinase mbk-2 (via 'Tyr-619' and 'Tyr-621'); mbk-2 tyrosine phosphorylation enhances the interaction. The interaction inhibits mbk-2 kinase activity and is required for mbk-2 oocyte cortex localization. Interacts with egg-3.

The protein resides in the cytoplasm. Its subcellular location is the cell cortex. In terms of biological role, inactive phosphatase which acts redundantly with egg-5 in the oocyte-to-zygote transition. Required for the polarization of cortical actin cytoskeleton rearrangement in the oocyte before and after fertilization. Together with egg-5, required for the cortical localization of kinase mbk-2 and for the inhibition of mbk-2 kinase activity in maturing oocyte until the end of meiosis I. Also required for kinase mbk-2, pseudophosphatase egg-3 and chitin synthase chs-1 localization to cytoplasmic foci after fertilization. The protein is Inactive protein-tyrosine phosphatase egg-4 of Caenorhabditis elegans.